The primary structure comprises 71 residues: DNA-directed RNA polymerases II, IV and V subunit 10 (71 aa).

Zn(2+)-binding residues include Cys-7, Cys-10, Cys-44, and Cys-45.

Belongs to the archaeal Rpo10/eukaryotic RPB10 RNA polymerase subunit family. As to quaternary structure, component of the RNA polymerase II, IV and V complexes. Interacts with NRPD1.

It is found in the nucleus. Functionally, DNA-dependent RNA polymerase catalyzes the transcription of DNA into RNA using the four ribonucleoside triphosphates as substrates. Component of RNA polymerase II which synthesizes mRNA precursors and many functional non-coding RNAs. Pol II is the central component of the basal RNA polymerase II transcription machinery. It is composed of mobile elements that move relative to each other. Component of RNA polymerases IV and V which mediate short-interfering RNAs (siRNA) accumulation and subsequent RNA-directed DNA methylation-dependent (RdDM) transcriptional gene silencing (TGS) of endogenous repeated sequences, including transposable elements. In Arabidopsis thaliana (Mouse-ear cress), this protein is DNA-directed RNA polymerases II, IV and V subunit 10 (NRPB10).